A 142-amino-acid chain; its full sequence is Large ribosomal subunit protein uL13 (142 aa).

It belongs to the universal ribosomal protein uL13 family. As to quaternary structure, part of the 50S ribosomal subunit.

Its function is as follows. This protein is one of the early assembly proteins of the 50S ribosomal subunit, although it is not seen to bind rRNA by itself. It is important during the early stages of 50S assembly. The sequence is that of Large ribosomal subunit protein uL13 from Stenotrophomonas maltophilia (strain K279a).